A 314-amino-acid polypeptide reads, in one-letter code: Putative S-adenosyl-L-methionine-dependent methyltransferase MAV_0301 (314 aa).

Residues Asp-132 and 161 to 162 (DL) contribute to the S-adenosyl-L-methionine site.

It belongs to the UPF0677 family.

Functionally, exhibits S-adenosyl-L-methionine-dependent methyltransferase activity. In Mycobacterium avium (strain 104), this protein is Putative S-adenosyl-L-methionine-dependent methyltransferase MAV_0301.